Reading from the N-terminus, the 91-residue chain is Probable Fe(2+)-trafficking protein (91 aa).

It belongs to the Fe(2+)-trafficking protein family.

Its function is as follows. Could be a mediator in iron transactions between iron acquisition and iron-requiring processes, such as synthesis and/or repair of Fe-S clusters in biosynthetic enzymes. The protein is Probable Fe(2+)-trafficking protein of Burkholderia thailandensis (strain ATCC 700388 / DSM 13276 / CCUG 48851 / CIP 106301 / E264).